Consider the following 110-residue polypeptide: Iron-sulfur cluster assembly protein CyaY (110 aa).

This sequence belongs to the frataxin family.

Involved in iron-sulfur (Fe-S) cluster assembly. May act as a regulator of Fe-S biogenesis. The chain is Iron-sulfur cluster assembly protein CyaY from Pseudomonas putida (strain ATCC 700007 / DSM 6899 / JCM 31910 / BCRC 17059 / LMG 24140 / F1).